Here is a 907-residue protein sequence, read N- to C-terminus: Translation initiation factor IF-2 (907 aa).

Basic and acidic residues-rich tracts occupy residues 223 to 235 (LAQRRQEEAKRAA), 251 to 263 (VAKEAPKPEEKNA), and 270 to 281 (GGKDWNDSDGKK). The tract at residues 223–320 (LAQRRQEEAK…ENQQHAFTAP (98 aa)) is disordered. A tr-type G domain is found at 407–576 (PRPPVVTVMG…LLQAEVLELK (170 aa)). The interval 416–423 (GHVDHGKT) is G1. A GTP-binding site is contributed by 416–423 (GHVDHGKT). The tract at residues 441 to 445 (GITQH) is G2. Positions 462-465 (DTPG) are G3. Residues 462–466 (DTPGH) and 516–519 (NKID) contribute to the GTP site. Residues 516-519 (NKID) are G4. The segment at 552-554 (SAK) is G5.

This sequence belongs to the TRAFAC class translation factor GTPase superfamily. Classic translation factor GTPase family. IF-2 subfamily.

The protein localises to the cytoplasm. Its function is as follows. One of the essential components for the initiation of protein synthesis. Protects formylmethionyl-tRNA from spontaneous hydrolysis and promotes its binding to the 30S ribosomal subunits. Also involved in the hydrolysis of GTP during the formation of the 70S ribosomal complex. This Methylobacillus flagellatus (strain ATCC 51484 / DSM 6875 / VKM B-1610 / KT) protein is Translation initiation factor IF-2.